A 582-amino-acid polypeptide reads, in one-letter code: MSRGDKMLKFEIKARDGAGRIGKLEVNGKKIETPAIMPVVNPKQMVVEPKELEKMGFEIIITNSYIIYKDEELRRKALELGIHRMLDYNGIIEVDSGSFQLMKYGSIEVSNREIIEFQHRIGVDIGTFLDIPTPPDAPREQAVKELEITLSRAREAEEIKEIPMNATIQGSTYTDLRRYAARRLSSMNFEIHPIGGVVPLLESYRFRDVVDIVISSKMALRPDRPVHLFGAGHPIVFALAVAMGVDLFDSASYALYAKDDRYMTPEGTKRLDELDYFPCSCPVCSKYTPQELREMPKEERTRLLALHNLWVIKEEIKRVKQAIKEGELWRLVDERARSHPKLYSAYKRLLEHYTFLEEFEPITKKSALFKISNESLRWPVVRRAKERAKSINERFGELVEHPIFGRVSRYLSLTYPFAQSEAEDDFKIEKPTKEDAIKYVMAIAEYQFGEGASRAFDDAKVELSKTGMPRQVKVNGKRLATVRADDGLLTLGIEGAKRLHRVLPYPRMRVVVNKEAEPFARKGKDVFAKFVIFADPGIRPYDEVLVVNENDELLATGQALLSGREMIVFQYGRAVKVRKGVE.

D95 acts as the Nucleophile in catalysis. Residues D130 and G196 each contribute to the substrate site. C279, C281, and C284 together coordinate Zn(2+). The 76-residue stretch at 507–582 (RMRVVVNKEA…RAVKVRKGVE (76 aa)) folds into the PUA domain.

Belongs to the archaeosine tRNA-ribosyltransferase family. Homodimer. Requires Zn(2+) as cofactor.

The enzyme catalyses guanosine(15) in tRNA + 7-cyano-7-deazaguanine = 7-cyano-7-carbaguanosine(15) in tRNA + guanine. The protein operates within tRNA modification; archaeosine-tRNA biosynthesis. Functionally, exchanges the guanine residue with 7-cyano-7-deazaguanine (preQ0) at position 15 in the dihydrouridine loop (D-loop) of archaeal tRNAs. This is tRNA-guanine(15) transglycosylase (tgtA) from Pyrococcus horikoshii (strain ATCC 700860 / DSM 12428 / JCM 9974 / NBRC 100139 / OT-3).